The following is a 393-amino-acid chain: Formate-dependent phosphoribosylglycinamide formyltransferase (393 aa).

N(1)-(5-phospho-beta-D-ribosyl)glycinamide is bound by residues 22–23 (EL) and glutamate 82. Residues arginine 114, lysine 155, 160 to 165 (SSGKGQ), 195 to 198 (EGFI), and glutamate 203 contribute to the ATP site. Residues 119-308 (RLAAEELGLP…EFALHARAIL (190 aa)) enclose the ATP-grasp domain. Mg(2+)-binding residues include glutamate 267 and glutamate 279. N(1)-(5-phospho-beta-D-ribosyl)glycinamide-binding positions include aspartate 286, lysine 356, and 363 to 364 (RR).

It belongs to the PurK/PurT family. Homodimer.

It catalyses the reaction N(1)-(5-phospho-beta-D-ribosyl)glycinamide + formate + ATP = N(2)-formyl-N(1)-(5-phospho-beta-D-ribosyl)glycinamide + ADP + phosphate + H(+). The protein operates within purine metabolism; IMP biosynthesis via de novo pathway; N(2)-formyl-N(1)-(5-phospho-D-ribosyl)glycinamide from N(1)-(5-phospho-D-ribosyl)glycinamide (formate route): step 1/1. Functionally, involved in the de novo purine biosynthesis. Catalyzes the transfer of formate to 5-phospho-ribosyl-glycinamide (GAR), producing 5-phospho-ribosyl-N-formylglycinamide (FGAR). Formate is provided by PurU via hydrolysis of 10-formyl-tetrahydrofolate. This chain is Formate-dependent phosphoribosylglycinamide formyltransferase, found in Pseudomonas aeruginosa (strain LESB58).